The primary structure comprises 614 residues: Polyamine transporter 2 (614 aa).

Positions 1–40 are disordered; sequence MSDQESVVSFNSQNTSMVDVEGQQPQQYVPSKTNSRANQL. Over 1–173 the chain is Cytoplasmic; sequence MSDQESVVSF…WPSWVRWSYT (173 aa). Serine 50 is modified (phosphoserine). The segment covering 99-122 has biased composition (polar residues); that stretch reads RTASALSRTRTKQLNRTATNSSST. The segment at 99 to 144 is disordered; that stretch reads RTASALSRTRTKQLNRTATNSSSTGKEEMEEEETEEREDQSGENEL. Residues 126 to 144 are compositionally biased toward acidic residues; it reads EMEEEETEEREDQSGENEL. Residues 174–194 form a helical membrane-spanning segment; that stretch reads VLLSILVICVAYGSACISGGL. At 195–206 the chain is on the extracellular side; sequence GTVEKKYHVGME. The helical transmembrane segment at 207–227 threads the bilayer; that stretch reads AAILSCSLMVIGFSLGPLIWS. Over 228-236 the chain is Cytoplasmic; it reads PVSDLYGRR. A helical membrane pass occupies residues 237-257; the sequence is VAYFVSMGLYVIFNIPCALAP. Residues 258 to 266 lie on the Extracellular side of the membrane; the sequence is NLGCLLACR. The helical transmembrane segment at 267–287 threads the bilayer; that stretch reads FLCGVWSSSGLCLVGGSIADM. Residues 288 to 297 lie on the Cytoplasmic side of the membrane; that stretch reads FPSETRGKAI. The chain crosses the membrane as a helical span at residues 298–318; that stretch reads AFFAFAPYVGPVVGPLVNGFI. Over 319–326 the chain is Extracellular; the sequence is SVSTGRMD. A helical membrane pass occupies residues 327-347; it reads LIFWVNMAFAGVMWIISSAIP. Over 348-407 the chain is Cytoplasmic; it reads ETYAPVILKRKAARLRKETGNPKIMTEQEAQGVSMSEMMRACLLRPLYFAVTEPVLVATC. The chain crosses the membrane as a helical span at residues 408–428; that stretch reads FYVCLIYSLLYAFFFAFPVIF. The Extracellular segment spans residues 429 to 437; the sequence is GELYGYKDN. A helical membrane pass occupies residues 438 to 458; that stretch reads LVGLMFIPIVIGALWALATTF. Residues 459-478 are Cytoplasmic-facing; the sequence is YCENKYLQIVKQRKPTPEDR. Residues 479–499 form a helical membrane-spanning segment; that stretch reads LLGAKIGAPFAAIALWILGAT. Topologically, residues 500 to 503 are extracellular; sequence AYKH. A helical membrane pass occupies residues 504–524; the sequence is IIWVGPASAGLAFGFGMVLIY. At 525–541 the chain is on the cytoplasmic side; the sequence is YSLNNYIIDCYVQYASS. The chain crosses the membrane as a helical span at residues 542-562; it reads ALATKVFLRSAGGAAFPLFTI. Residues 563–574 lie on the Extracellular side of the membrane; the sequence is QMYHKLNLHWGS. The helical transmembrane segment at 575-595 threads the bilayer; sequence WLLAFISTAMIALPFAFSYWG. At 596–614 the chain is on the cytoplasmic side; sequence KGLRHKLSKKDYSIDSVEM.

The protein belongs to the major facilitator superfamily. DHA1 family. Polyamines/proton antiporter (TC 2.A.1.2.16) subfamily.

The protein localises to the cell membrane. Functionally, cell membrane polyamine/proton antiporter, involved in the detoxification of excess polyamines in the cytoplasm. Recognizes spermine, but not spermidine. This is Polyamine transporter 2 (TPO2) from Saccharomyces cerevisiae (strain ATCC 204508 / S288c) (Baker's yeast).